A 116-amino-acid polypeptide reads, in one-letter code: Nucleoid-associated protein EUBELI_02017 (116 aa).

The span at 1–12 shows a compositional bias: gly residues; the sequence is MAKRGGFPGGMP. A disordered region spans residues 1 to 42; that stretch reads MAKRGGFPGGMPGNMNNLMKQAQRMQRQMEEQQAELENKEFS. Over residues 13 to 26 the composition is skewed to low complexity; that stretch reads GNMNNLMKQAQRMQ.

This sequence belongs to the YbaB/EbfC family. As to quaternary structure, homodimer.

The protein localises to the cytoplasm. The protein resides in the nucleoid. Its function is as follows. Binds to DNA and alters its conformation. May be involved in regulation of gene expression, nucleoid organization and DNA protection. The protein is Nucleoid-associated protein EUBELI_02017 of Lachnospira eligens (strain ATCC 27750 / DSM 3376 / VPI C15-48 / C15-B4) (Eubacterium eligens).